The following is a 946-amino-acid chain: Bifunctional glutamine synthetase adenylyltransferase/adenylyl-removing enzyme (946 aa).

The adenylyl removase stretch occupies residues 1 to 440; that stretch reads MKPLSSPLQQ…VFNELIGDDE (440 aa). An adenylyl transferase region spans residues 449–946; it reads SEQWRELWQD…ASWQKWLVEE (498 aa).

The protein belongs to the GlnE family. The cofactor is Mg(2+).

It catalyses the reaction [glutamine synthetase]-O(4)-(5'-adenylyl)-L-tyrosine + phosphate = [glutamine synthetase]-L-tyrosine + ADP. The enzyme catalyses [glutamine synthetase]-L-tyrosine + ATP = [glutamine synthetase]-O(4)-(5'-adenylyl)-L-tyrosine + diphosphate. Its function is as follows. Involved in the regulation of glutamine synthetase GlnA, a key enzyme in the process to assimilate ammonia. When cellular nitrogen levels are high, the C-terminal adenylyl transferase (AT) inactivates GlnA by covalent transfer of an adenylyl group from ATP to specific tyrosine residue of GlnA, thus reducing its activity. Conversely, when nitrogen levels are low, the N-terminal adenylyl removase (AR) activates GlnA by removing the adenylyl group by phosphorolysis, increasing its activity. The regulatory region of GlnE binds the signal transduction protein PII (GlnB) which indicates the nitrogen status of the cell. This is Bifunctional glutamine synthetase adenylyltransferase/adenylyl-removing enzyme from Escherichia coli (strain SE11).